Consider the following 447-residue polypeptide: Tubulin alpha chain (447 aa).

GTP contacts are provided by Gln-11, Glu-71, Gly-144, Thr-145, Thr-179, Asn-206, and Asn-228. Glu-71 is a binding site for Mg(2+). Glu-254 is a catalytic residue.

It belongs to the tubulin family. Dimer of alpha and beta chains. A typical microtubule is a hollow water-filled tube with an outer diameter of 25 nm and an inner diameter of 15 nM. Alpha-beta heterodimers associate head-to-tail to form protofilaments running lengthwise along the microtubule wall with the beta-tubulin subunit facing the microtubule plus end conferring a structural polarity. Microtubules usually have 13 protofilaments but different protofilament numbers can be found in some organisms and specialized cells. Mg(2+) serves as cofactor.

The protein resides in the cytoplasm. The protein localises to the cytoskeleton. It catalyses the reaction GTP + H2O = GDP + phosphate + H(+). Tubulin is the major constituent of microtubules, a cylinder consisting of laterally associated linear protofilaments composed of alpha- and beta-tubulin heterodimers. Microtubules grow by the addition of GTP-tubulin dimers to the microtubule end, where a stabilizing cap forms. Below the cap, tubulin dimers are in GDP-bound state, owing to GTPase activity of alpha-tubulin. This chain is Tubulin alpha chain (TUBA), found in Avena sativa (Oat).